Here is a 362-residue protein sequence, read N- to C-terminus: Cobalt-precorrin-5B C(1)-methyltransferase (362 aa).

Belongs to the CbiD family.

The catalysed reaction is Co-precorrin-5B + S-adenosyl-L-methionine = Co-precorrin-6A + S-adenosyl-L-homocysteine. It participates in cofactor biosynthesis; adenosylcobalamin biosynthesis; cob(II)yrinate a,c-diamide from sirohydrochlorin (anaerobic route): step 6/10. Functionally, catalyzes the methylation of C-1 in cobalt-precorrin-5B to form cobalt-precorrin-6A. The chain is Cobalt-precorrin-5B C(1)-methyltransferase from Burkholderia thailandensis (strain ATCC 700388 / DSM 13276 / CCUG 48851 / CIP 106301 / E264).